A 167-amino-acid chain; its full sequence is Cytochrome c-type biogenesis protein CcmE (167 aa).

Topologically, residues 1–7 are cytoplasmic; that stretch reads MTRKQRR. Residues 8-28 form a helical; Signal-anchor for type II membrane protein membrane-spanning segment; sequence LLMIGGAGVVLIVAVGLVLNA. The Periplasmic portion of the chain corresponds to 29–167; the sequence is LRDSIVFFST…TSANAAEGGK (139 aa). 2 residues coordinate heme: histidine 122 and tyrosine 126. Residues 137 to 150 are compositionally biased toward basic and acidic residues; sequence KDGHWKDDYGKKSP. Positions 137 to 167 are disordered; it reads KDGHWKDDYGKKSPGETTAGQTSANAAEGGK. Over residues 151 to 161 the composition is skewed to polar residues; sequence GETTAGQTSAN.

The protein belongs to the CcmE/CycJ family.

It localises to the cell inner membrane. Its function is as follows. Heme chaperone required for the biogenesis of c-type cytochromes. Transiently binds heme delivered by CcmC and transfers the heme to apo-cytochromes in a process facilitated by CcmF and CcmH. In Rhodopseudomonas palustris (strain ATCC BAA-98 / CGA009), this protein is Cytochrome c-type biogenesis protein CcmE.